The chain runs to 458 residues: Probable Xaa-Pro aminopeptidase pepP (458 aa).

Residues Asp254, Asp265, Glu388, and Glu428 each coordinate Mn(2+).

Belongs to the peptidase M24B family. Mn(2+) serves as cofactor.

The enzyme catalyses Release of any N-terminal amino acid, including proline, that is linked to proline, even from a dipeptide or tripeptide.. Functionally, catalyzes the removal of a penultimate prolyl residue from the N-termini of peptides. The chain is Probable Xaa-Pro aminopeptidase pepP (pepP) from Botryotinia fuckeliana (strain B05.10) (Noble rot fungus).